A 304-amino-acid polypeptide reads, in one-letter code: MGPTASGKTDLAIALRQTLPVEVISVDSALIYKGMDIGTAKPSKAELELAPHRLIDILDPSESYSAMNFREDALREMAEITASGRIPLLVGGTMLYYKALLEGLSPLPSADPEIRAEIEAKAEQIGWSGLHRELLAIDPIAGKRINPNDSQRINRALEVFYITGKTMTELTAQQGDSLPYNVLQFAIAPQDRAVLHQRIEQRFYKMMELGFQQEVEKLRARSDLHKDLPSIRCVGYRQMWEYLDGDISLDEAIYKGICATRQLAKRQITWLRGWNSEITWLDSLDPTSSKLKMIEKIAQNSIKL.

ATP is bound at residue 2-9 (GPTASGKT). 4–9 (TASGKT) lines the substrate pocket. Interaction with substrate tRNA regions lie at residues 27–30 (DSAL), 151–155 (QRINR), 232–237 (RCVGYR), and 265–272 (KRQITWLR).

This sequence belongs to the IPP transferase family. Monomer. It depends on Mg(2+) as a cofactor.

It catalyses the reaction adenosine(37) in tRNA + dimethylallyl diphosphate = N(6)-dimethylallyladenosine(37) in tRNA + diphosphate. Catalyzes the transfer of a dimethylallyl group onto the adenine at position 37 in tRNAs that read codons beginning with uridine, leading to the formation of N6-(dimethylallyl)adenosine (i(6)A). This chain is tRNA dimethylallyltransferase, found in Actinobacillus pleuropneumoniae serotype 7 (strain AP76).